A 390-amino-acid polypeptide reads, in one-letter code: Delta-aminolevulinic acid dehydratase, chloroplastic (390 aa).

The N-terminal 24 residues, Met-1–Ala-24, are a transit peptide targeting the chloroplast. The interval Val-34–Phe-69 is disordered. Residue Lys-251 is the Schiff-base intermediate with substrate of the active site. Positions 261 and 281 each coordinate 5-aminolevulinate. Residue Glu-297 coordinates Mg(2+). Lys-312 acts as the Schiff-base intermediate with substrate in catalysis. Ser-338 and Tyr-377 together coordinate 5-aminolevulinate.

The protein belongs to the ALAD family. In terms of assembly, homooctamer. It depends on Mg(2+) as a cofactor.

It is found in the plastid. The protein resides in the chloroplast. It carries out the reaction 2 5-aminolevulinate = porphobilinogen + 2 H2O + H(+). It participates in porphyrin-containing compound metabolism; protoporphyrin-IX biosynthesis; coproporphyrinogen-III from 5-aminolevulinate: step 1/4. Its function is as follows. Catalyzes an early step in the biosynthesis of tetrapyrroles. Binds two molecules of 5-aminolevulinate per subunit, each at a distinct site, and catalyzes their condensation to form porphobilinogen. The protein is Delta-aminolevulinic acid dehydratase, chloroplastic (HEMB) of Chlamydomonas reinhardtii (Chlamydomonas smithii).